Here is a 303-residue protein sequence, read N- to C-terminus: Bidirectional sugar transporter SWEET14 (303 aa).

At 1–9 (MAGMSLQHP) the chain is on the extracellular side. Residues 10–30 (WAFAFGLLGNIISFMTYLAPL) traverse the membrane as a helical segment. Residues 13–98 (AFGLLGNIIS…AVYLVYAPKK (86 aa)) form the MtN3/slv 1 domain. Residues 31 to 44 (PTFYRIYKSKSTQG) are Cytoplasmic-facing. A helical membrane pass occupies residues 45 to 65 (FQSVPYVVALFSAMLWIYYAL). Residues 66–72 (LKSDECL) are Extracellular-facing. A helical transmembrane segment spans residues 73-93 (LITINSAGCVIETIYIAVYLV). The Cytoplasmic segment spans residues 94–105 (YAPKKAKMFTAK). Residues 106-126 (LLLLVNVGVFGLILLLTLLLS) form a helical membrane-spanning segment. Residues 127-133 (AGDRRIV) are Extracellular-facing. A helical membrane pass occupies residues 134–154 (VLGWVCVGFSVSVFVAPLSII). The MtN3/slv 2 domain occupies 134-217 (VLGWVCVGFS…MGLYAMYRNS (84 aa)). At 155–167 (RLVVRTKSVEFMP) the chain is on the cytoplasmic side. A helical transmembrane segment spans residues 168-188 (FSLSFSLTISAVVWFLYGLLI). The Extracellular portion of the chain corresponds to 189-192 (KDKY). A helical membrane pass occupies residues 193 to 213 (VALPNVLGFSFGVIQMGLYAM). Topologically, residues 214–303 (YRNSTPKAVL…AGAGEKKVAA (90 aa)) are cytoplasmic. The tract at residues 266-290 (HPVDVESPPAEAPPQEDDKAAAATA) is disordered.

This sequence belongs to the SWEET sugar transporter family. In terms of assembly, forms homooligomers and/or heterooligomers.

The protein localises to the cell membrane. Its function is as follows. Mediates both low-affinity uptake and efflux of sugar across the plasma membrane. In Oryza sativa subsp. indica (Rice), this protein is Bidirectional sugar transporter SWEET14 (SWEET14).